Reading from the N-terminus, the 148-residue chain is UPF0260 protein PM0539 (148 aa).

The protein belongs to the UPF0260 family.

In Pasteurella multocida (strain Pm70), this protein is UPF0260 protein PM0539.